Reading from the N-terminus, the 266-residue chain is MQTDNTKSNTNKTAKQEWGSFAFVICIALLIRILIMEPFNVPTGSMKATILENDYIFSTKYSYGYSNYSLSFFDFIPLFKGRIFAREPDRGDIVVFRPPNDMSVRYIKRLIGLPGDKIQLIDDVIYINDKKIERTEVGTYISEEGIKYLKFKETLPNGRTYFSYKLAPIYGVIYNDRYSNTDVFYVPEGQYFFLGDNRDQSNDSRVNLGFVPFENFIAKAQFIWFSTKITWWDNDIGVINLVLKLKPWIESVRLNRIFRNLYNTDA.

The Cytoplasmic portion of the chain corresponds to 1 to 20 (MQTDNTKSNTNKTAKQEWGS). Residues 21–41 (FAFVICIALLIRILIMEPFNV) form a helical membrane-spanning segment. Topologically, residues 42 to 266 (PTGSMKATIL…IFRNLYNTDA (225 aa)) are extracellular. Catalysis depends on residues S45 and K108.

The protein belongs to the peptidase S26 family.

Its subcellular location is the cell membrane. It carries out the reaction Cleavage of hydrophobic, N-terminal signal or leader sequences from secreted and periplasmic proteins.. The polypeptide is Signal peptidase I (lepB) (Rickettsia conorii (strain ATCC VR-613 / Malish 7)).